We begin with the raw amino-acid sequence, 97 residues long: Protein YcgL (97 aa).

Positions 1–85 (MLCVIYRSSK…PPEDLLKQHL (85 aa)) constitute a YcgL domain.

The protein is Protein YcgL of Escherichia fergusonii (strain ATCC 35469 / DSM 13698 / CCUG 18766 / IAM 14443 / JCM 21226 / LMG 7866 / NBRC 102419 / NCTC 12128 / CDC 0568-73).